A 719-amino-acid chain; its full sequence is Aminodeoxychorismate synthase (719 aa).

In terms of domain architecture, Glutamine amidotransferase type-1 spans 5-199; that stretch reads RTLLIDNYDS…RDLSLRAAGH (195 aa). Cys86 functions as the Nucleophile in the catalytic mechanism. Residues His173 and Glu175 contribute to the active site. A disordered region spans residues 199–224; sequence HRPPHTERIPAPAPAPAPAPAPAPPA. The span at 209–224 shows a compositional bias: pro residues; the sequence is APAPAPAPAPAPAPPA.

The protein in the C-terminal section; belongs to the anthranilate synthase component I family.

It catalyses the reaction chorismate + L-glutamine = 4-amino-4-deoxychorismate + L-glutamate. It functions in the pathway antibiotic biosynthesis. Its function is as follows. Involved in pristinamycin I biosynthesis. Catalyzes the biosynthesis of 4-amino-4-deoxychorismate (ADC) from chorismate and glutamine. The sequence is that of Aminodeoxychorismate synthase from Streptomyces pristinaespiralis.